The following is a 35-amino-acid chain: Beta/omega-theraphotoxin-Bp1a (35 aa).

3 disulfides stabilise this stretch: Cys-2–Cys-16, Cys-9–Cys-21, and Cys-15–Cys-28.

The protein belongs to the neurotoxin 10 (Hwtx-1) family. 54 (ProTx-1) subfamily. Post-translationally, an unnatural amidation at Ser-35 provokes a 14-fold increased toxin ability to inhibit Nav1.2/SCN2A and a ~2-fold decreased toxin ability to inhibit both Nav1.5/SCN5A and Nav1.7/SCN9A. In terms of tissue distribution, expressed by the venom gland.

The protein resides in the secreted. Functionally, ion channel impairing toxin that inhibits voltage-gated calcium channel Cav3.1/CACNA1G (IC(50)=53 nM), voltage-gated potassium channels Kv2.1/KCNB1 (IC(50)=411 nM), all sodium channels tested (Nav1.2/SCN2A (IC(50)=60-104 nM), Nav1.5/SCN5A (IC(50)=76-358 nM), Nav1.6/SCN8A (IC(50)=21-133 nM), Nav1.7/SCN9A (IC(50)=51-95 nM), and Nav1.8/SCN10A) as well as the nociceptor cation channel TRPA1 (IC(50)=389 nM). Acts as a potent and selective blocker of voltage-gated calcium channel Cav3.1/CACNA1G, but not of Cav3.2/CACNA1H, and Cav3.3/CACNA1I. On Nav1.7/SCN9A, primarily interacts with the DII and DIV voltage-sensor domains. Also acts as an inhibitor of nociceptor cation channel TRPA1 (IC(50)~389 nM) by binding to the S1-S4 gating domain of TRPA1. It shows moderate affinity for lipid bilayers. In Bumba pulcherrimaklaasi (Tarantula spider), this protein is Beta/omega-theraphotoxin-Bp1a.